Consider the following 396-residue polypeptide: MAGSSLRQVAVFGATGSIGASALDVIARHPERLRASVLSAGSKVEDLLALCAAHRPAHAVIADAALYPALRDGLRALGLATQAHAGAEALDALAGSDACDTVVAAIVGAAGLPSTLAAARAGKRLLLANKESLVLAGELLTRTATAAGAEIIPIDSEHSAIFQCLRSCDAGRGVRRVILTASGGPFRGRDRAALAAVTPAQAVAHPKWSMGPKISVDSATLMNKGLEVIEAHHLFGLPGEQIDVLVHPQSLVHSLVEFVDGSTLAQLGLPDMRTTLAVGLAWPERVESGVGGLDLLSQGRLDFEAPDTAAFPCLRLAWDALRAGGTAPAVLNAANEVAVSAFLQGQVGFLAIPALVEHALTTLPRHNADTLDTLLFADAQARQVTERALAHHALHA.

NADPH is bound by residues T15, G16, S17, I18, G41, and N129. K130 is a binding site for 1-deoxy-D-xylulose 5-phosphate. E131 contacts NADPH. A Mn(2+)-binding site is contributed by D155. 4 residues coordinate 1-deoxy-D-xylulose 5-phosphate: S156, E157, S182, and H205. Residue E157 participates in Mn(2+) binding. Position 211 (G211) interacts with NADPH. Residues S218, N223, K224, and E227 each contribute to the 1-deoxy-D-xylulose 5-phosphate site. E227 is a Mn(2+) binding site.

It belongs to the DXR family. The cofactor is Mg(2+). It depends on Mn(2+) as a cofactor.

The enzyme catalyses 2-C-methyl-D-erythritol 4-phosphate + NADP(+) = 1-deoxy-D-xylulose 5-phosphate + NADPH + H(+). It participates in isoprenoid biosynthesis; isopentenyl diphosphate biosynthesis via DXP pathway; isopentenyl diphosphate from 1-deoxy-D-xylulose 5-phosphate: step 1/6. Functionally, catalyzes the NADPH-dependent rearrangement and reduction of 1-deoxy-D-xylulose-5-phosphate (DXP) to 2-C-methyl-D-erythritol 4-phosphate (MEP). The chain is 1-deoxy-D-xylulose 5-phosphate reductoisomerase from Xanthomonas oryzae pv. oryzae (strain PXO99A).